A 221-amino-acid chain; its full sequence is Uridylate kinase (221 aa).

Residue 7–11 participates in ATP binding; that stretch reads KISGK. Gly-43 serves as a coordination point for UMP. Residues Gly-44 and Arg-48 each contribute to the ATP site. UMP contacts are provided by residues Asp-62 and 109–115; that span reads LQPGQST. ATP-binding residues include Thr-135 and Tyr-141.

It belongs to the UMP kinase family. In terms of assembly, homohexamer.

The protein resides in the cytoplasm. The catalysed reaction is UMP + ATP = UDP + ADP. The protein operates within pyrimidine metabolism; CTP biosynthesis via de novo pathway; UDP from UMP (UMPK route): step 1/1. With respect to regulation, inhibited by UTP. Functionally, catalyzes the reversible phosphorylation of UMP to UDP. This chain is Uridylate kinase, found in Ignicoccus hospitalis (strain KIN4/I / DSM 18386 / JCM 14125).